The following is a 304-amino-acid chain: Non-specific ribonucleoside hydrolase RihC (304 aa).

Residue His-233 is part of the active site.

It belongs to the IUNH family. RihC subfamily.

Its function is as follows. Hydrolyzes both purine and pyrimidine ribonucleosides with a broad-substrate specificity. The protein is Non-specific ribonucleoside hydrolase RihC of Shigella boydii serotype 18 (strain CDC 3083-94 / BS512).